The chain runs to 425 residues: Phosphomethylpyrimidine synthase (425 aa).

Residues methionine 94, tyrosine 123, histidine 162, 184-186 (SRG), 225-228 (NGMR), and glutamate 264 contribute to the substrate site. Histidine 268 lines the Zn(2+) pocket. Tyrosine 291 contributes to the substrate binding site. A Zn(2+)-binding site is contributed by histidine 332. Cysteine 407, cysteine 410, and cysteine 414 together coordinate [4Fe-4S] cluster.

This sequence belongs to the ThiC family. [4Fe-4S] cluster serves as cofactor.

The enzyme catalyses 5-amino-1-(5-phospho-beta-D-ribosyl)imidazole + S-adenosyl-L-methionine = 4-amino-2-methyl-5-(phosphooxymethyl)pyrimidine + CO + 5'-deoxyadenosine + formate + L-methionine + 3 H(+). It functions in the pathway cofactor biosynthesis; thiamine diphosphate biosynthesis. Its function is as follows. Catalyzes the synthesis of the hydroxymethylpyrimidine phosphate (HMP-P) moiety of thiamine from aminoimidazole ribotide (AIR) in a radical S-adenosyl-L-methionine (SAM)-dependent reaction. The polypeptide is Phosphomethylpyrimidine synthase (Methanoregula boonei (strain DSM 21154 / JCM 14090 / 6A8)).